Consider the following 313-residue polypeptide: 2-dehydro-3-deoxygluconokinase/2-dehydro-3-deoxygalactonokinase (313 aa).

Substrate-binding positions include 34–38 (GSELN), Y90, 106–108 (YYR), and R166. ATP contacts are provided by residues 164–166 (NIR), 226–231 (KLGSKG), and 255–258 (GAGD). 2 residues coordinate substrate: D258 and D294. Catalysis depends on D258, which acts as the Proton acceptor.

Homohexamer; trimer of dimers.

The enzyme catalyses 2-dehydro-3-deoxy-D-gluconate + ATP = 2-dehydro-3-deoxy-6-phospho-D-gluconate + ADP + H(+). The catalysed reaction is 2-dehydro-3-deoxy-D-galactonate + ATP = 2-dehydro-3-deoxy-6-phospho-D-galactonate + ADP + H(+). It functions in the pathway carbohydrate acid metabolism; 2-dehydro-3-deoxy-D-gluconate degradation; D-glyceraldehyde 3-phosphate and pyruvate from 2-dehydro-3-deoxy-D-gluconate: step 1/2. In terms of biological role, involved in the degradation of glucose and galactose via the semi-phosphorylative Entner-Doudoroff pathway. Catalyzes the phosphorylation of 2-keto-3-deoxygluconate (KDG) and 2-keto-3-deoxygalactonate (KDGal) to produce 2-keto-3-deoxy-6-phosphogluconate (KDPG) and 2-keto-3-deoxy-6-phosphogalactonate (KDPGal), respectively. This Saccharolobus solfataricus (strain ATCC 35092 / DSM 1617 / JCM 11322 / P2) (Sulfolobus solfataricus) protein is 2-dehydro-3-deoxygluconokinase/2-dehydro-3-deoxygalactonokinase (kdgK).